The sequence spans 320 residues: Cytochrome f (320 aa).

The signal sequence occupies residues 1–35 (MQTRNTFSWIREEITRSISVSLIIYIITWASISSA). Heme is bound by residues Tyr-36, Cys-56, Cys-59, and His-60. Residues 286–305 (VQGLLFFLGSVVLAQIFLVL) form a helical membrane-spanning segment.

Belongs to the cytochrome f family. The 4 large subunits of the cytochrome b6-f complex are cytochrome b6, subunit IV (17 kDa polypeptide, petD), cytochrome f and the Rieske protein, while the 4 small subunits are PetG, PetL, PetM and PetN. The complex functions as a dimer. Heme serves as cofactor.

It is found in the plastid. The protein localises to the chloroplast thylakoid membrane. Functionally, component of the cytochrome b6-f complex, which mediates electron transfer between photosystem II (PSII) and photosystem I (PSI), cyclic electron flow around PSI, and state transitions. The polypeptide is Cytochrome f (petA) (Arabidopsis thaliana (Mouse-ear cress)).